A 405-amino-acid polypeptide reads, in one-letter code: K(+)/H(+) antiporter subunit KhtU (405 aa).

12 helical membrane-spanning segments follow: residues 3 to 23 (HLVF…VIAN), 29 to 49 (IIPF…KMGI), 60 to 80 (IIEF…GLEF), 85 to 105 (LIKS…INFS), 108 to 128 (LLYG…AGVI), 153 to 173 (LILG…SVVS), 183 to 203 (VGSA…FFIA), 222 to 242 (VFII…ETIH), 268 to 288 (LVVP…GLSI), 297 to 317 (VWLA…AGMV), 332 to 352 (IGLT…LGIA), and 357 to 377 (ATLK…GPLV).

Belongs to the monovalent cation:proton antiporter 2 (CPA2) transporter (TC 2.A.37) family. In terms of assembly, the transporter is composed of the integral membrane protein KhtU and the regulatory protein KhtT.

It is found in the cell membrane. Potassium antiport activity requires the presence of KhtT. Activity is also modulated by KhtS. Has higher activity at alkaline pH. Its function is as follows. Potassium/proton antiporter that mediates the efflux of potassium ions from the cell. Can also mediate rubidium/proton antiport, but has no permeability for sodium or lithium ions. In the absence of KhtT, does not have antiport activity, but can catalyze potassium efflux. Involved in protection of the cell from methylglyoxal, a toxic by-product of glycolysis, via activation by S-lactoyl-BSH of the antiporter activity, leading to cytoplasmic acidification and methylglyoxal resistance. This chain is K(+)/H(+) antiporter subunit KhtU, found in Bacillus subtilis (strain 168).